The chain runs to 251 residues: Metallo-beta-lactamase domain-containing protein 1 (251 aa).

The Zn(2+) site is built by H118, H120, D122, H123, H173, D196, and H235.

This sequence belongs to the metallo-beta-lactamase superfamily. Glyoxalase II family. As to quaternary structure, homodimer. The cofactor is Zn(2+).

Its subcellular location is the cytoplasm. It is found in the cytosol. The protein localises to the nucleus. It carries out the reaction a ribonucleotidyl-ribonucleotide-RNA + H2O = a 3'-end ribonucleotide-RNA + a 5'-end 5'-phospho-ribonucleoside-RNA + H(+). In terms of biological role, endoribonuclease that catalyzes the hydrolysis of histone-coding pre-mRNA 3'-end. Involved in histone pre-mRNA processing during the S-phase of the cell cycle, which is required for entering/progressing through S-phase. Cleaves histone pre-mRNA at a major and a minor cleavage site after the 5'-ACCCA-3' and the 5'-ACCCACA-3' sequence, respectively, and located downstream of the stem-loop. May require the presence of the HDE element located at the histone pre-RNA 3'-end to avoid non-specific cleavage. This is Metallo-beta-lactamase domain-containing protein 1 (Mblac1) from Rattus norvegicus (Rat).